We begin with the raw amino-acid sequence, 655 residues long: Forkhead box protein O1 (655 aa).

2 disordered regions span residues 1–63 (MAEA…SASA) and 116–158 (GCLH…SRRN). A Phosphothreonine; by PKB/AKT1 or PKB/AKT2 and SGK1 modification is found at threonine 24. The span at 33–63 (SQSNSATSSPAPSGSAAANPDAAAGLPSASA) shows a compositional bias: low complexity. Residues 120–141 (PAPPQPPPPGPLSQHPPVPPAA) are compositionally biased toward pro residues. The fork-head DNA-binding region spans 159–235 (AWGNLSYADL…VQNEGTGKSS (77 aa)). DNA-binding regions lie at residues 211–218 (NSIRHNLS) and 234–237 (SSWW). A phosphoserine; by STK4/MST1 mark is found at serine 212, serine 218, serine 234, and serine 235. The disordered stretch occupies residues 234–344 (SSWWMLNPEG…QDDLGEGDVH (111 aa)). An N6-acetyllysine mark is found at lysine 245 and lysine 248. Serine 249 is modified (phosphoserine; by CDK1). Residues arginine 251 and arginine 253 each carry the omega-N-methylarginine; by PRMT1 modification. The Nuclear localization signal motif lies at 251 to 253 (RRR). Phosphoserine; by PKB/AKT1 and SGK1 is present on serine 256. 3 positions are modified to N6-acetyllysine: lysine 262, lysine 265, and lysine 274. A compositionally biased stretch (basic residues) spans 264-275 (AKSRSRAAKKKA). Residues 283-563 (GAGDSPGSQF…RLTQVKTPVQ (281 aa)) form a sufficient for interaction with NLK region. 2 positions are modified to phosphoserine: serine 287 and serine 298. Residues 309-326 (NWSTFRPRTSSNASTISG) are compositionally biased toward polar residues. Serine 319 bears the Phosphoserine; by PKB/AKT1 mark. Serine 322 bears the Phosphoserine; by CK1 and SGK1 mark. At serine 325 the chain carries Phosphoserine; by CK1. Phosphoserine; by DYRK1A is present on serine 329. Phosphothreonine is present on threonine 333. The segment at 363 to 459 (SEISNPENME…GGMSQYNCAP (97 aa)) is required for interaction with RUNX2. Position 423 is an N6-acetyllysine (lysine 423). The Required for interaction with SIRT1 motif lies at 462-466 (LKELL). Positions 507-534 (YGSQASHNKMMNPSSHTHPGHAQQTSAV) are enriched in polar residues. The interval 507–537 (YGSQASHNKMMNPSSHTHPGHAQQTSAVNGR) is disordered.

Interacts with LRPPRC. Interacts with RUNX2; the interaction inhibits RUNX2 transcriptional activity and mediates the IGF1/insulin-dependent BGLAP expression in osteoblasts Interacts with PPP2R1A; the interaction regulates the dephosphorylation of FOXO1 at Thr-24 and Ser-256 leading to its nuclear import. Interacts (acetylated form) with PPARG. Interacts with XBP1 isoform 2; this interaction is direct and leads to FOXO1 ubiquitination and degradation via the proteasome pathway. Interacts with NLK. Interacts with SIRT1; the interaction results in the deacetylation of FOXO1 leading to activation of FOXO1-mediated transcription of genes involved in DNA repair and stress resistance. Binds to CDK1. Interacts with the 14-3-3 proteins, YWHAG and YWHAZ; the interactions require insulin-stimulated phosphorylation on Thr-24, promote nuclear exit and loss of transcriptional activity. Interacts with SKP2; the interaction ubiquitinates FOXO1 leading to its proteasomal degradation. The interaction requires the presence of KRIT1. Interacts (via the C-terminal half) with ATF4 (via its DNA-binding domain); the interaction occurs in osteoblasts, regulates glucose homeostasis via suppression of beta-cell proliferation and subsequent decrease in insulin production. Interacts with PRMT1; the interaction methylates FOXO1, prevents PKB/AKT1 phosphorylation and retains FOXO1 in the nucleus. Interacts with EP300 and CREBBP; the interactions acetylate FOXO1. Interacts with SIRT2; the interaction is disrupted in response to oxidative stress or serum deprivation, leading to increased level of acetylated FOXO1, which promotes stress-induced autophagy by stimulating E1-like activating enzyme ATG7. Interacts (acetylated form) with ATG7; the interaction is increased in response to oxidative stress or serum deprivation and promotes the autophagic process leading to cell death. Interacts (via the Fork-head domain) with CEBPA; the interaction increases when FOXO1 is deacetylated. Interacts with WDFY2. Forms a complex with WDFY2 and AKT1. Interacts with CRY1. Interacts with PPIA/CYPA; the interaction promotes FOXO1 dephosphorylation, nuclear accumulation and transcriptional activity. Interacts with TOX4; FOXO1 is required for full induction of TOX4-dependent activity and the interaction is inhibited by insulin. Interacts (when phosphorylated on Ser-256) with STUB1/CHIP. In terms of processing, phosphorylation by NLK promotes nuclear export and inhibits the transcriptional activity. In response to growth factors, phosphorylation on Thr-24, Ser-256 and Ser-322 by PKB/AKT1 promotes nuclear export and inactivation of transactivational activity. Phosphorylation on Thr-24 is required for binding 14-3-3 proteins. Phosphorylation of Ser-256 decreases DNA-binding activity and promotes the phosphorylation of Thr-24 and Ser-319, permitting phosphorylation of Ser-322 and Ser-325, probably by CDK1, leading to nuclear exclusion and loss of function. Stress signals, such as response to oxygen or nitric oxide, attenuate the PKB/AKT1-mediated phosphorylation leading to nuclear retention. Phosphorylation of Ser-329 is independent of IGF1 and leads to reduced function. Dephosphorylated on Thr-24 and Ser-256 by PP2A in beta-cells under oxidative stress leading to nuclear retention. Phosphorylation of Ser-249 by CDK1 disrupts binding of 14-3-3 proteins leading to nuclear accumulation and has no effect on DNA-binding nor transcriptional activity. Phosphorylation by STK4/MST1 on Ser-212, upon oxidative stress, inhibits binding to 14-3-3 proteins and nuclear export. PPIA/CYPA promotes its dephosphorylation on Ser-256. Ubiquitinated by SKP2. Ubiquitination leads to proteasomal degradation. Ubiquitinated by STUB1/CHIP; when Ser-256 is phosphorylated. Post-translationally, methylation inhibits AKT1-mediated phosphorylation at Ser-256 and is increased by oxidative stress. In terms of processing, acetylated. Acetylation at Lys-262, Lys-265 and Lys-274 are necessary for autophagic cell death induction. Deacetylated by SIRT2 in response to oxidative stress or serum deprivation, thereby negatively regulating FOXO1-mediated autophagic cell death. Once in the nucleus, acetylated by CREBBP/EP300. Acetylation diminishes the interaction with target DNA and attenuates the transcriptional activity. It increases the phosphorylation at Ser-256. Deacetylation by SIRT1 results in reactivation of the transcriptional activity. Oxidative stress by hydrogen peroxide treatment appears to promote deacetylation and uncoupling of insulin-induced phosphorylation. By contrast, resveratrol acts independently of acetylation. Acetylated at Lys-423, promoting its localization to the nucleus and transcription factor activity. Deacetylation at Lys-423 by SIRT6, promotes its translocation into the cytoplasm, preventing its transcription factor activity. Deacetylation and subsequent inhibition by SIRT6 has different effects depending on cell types: it inhibits gluconeogenesis in hepatocytes, promotes glucose sensing in pancreatic beta-cells and regulates lipid catabolism in brown adipocytes. In terms of tissue distribution, expressed in umbilical endothelial cells (at protein level). Abundantly expressed in skeletal muscle and ovary, with lower expression in the heart, placenta, lung, liver, pancreas, spleen, testis and small intestine. Weakly expressed in the brain, thymus, prostate and mucosal lining of the colon.

Its subcellular location is the cytoplasm. The protein resides in the nucleus. Its function is as follows. Transcription factor that is the main target of insulin signaling and regulates metabolic homeostasis in response to oxidative stress. Binds to the insulin response element (IRE) with consensus sequence 5'-TT[G/A]TTTTG-3' and the related Daf-16 family binding element (DBE) with consensus sequence 5'-TT[G/A]TTTAC-3'. Activity suppressed by insulin. Main regulator of redox balance and osteoblast numbers and controls bone mass. Orchestrates the endocrine function of the skeleton in regulating glucose metabolism. Also acts as a key regulator of chondrogenic commitment of skeletal progenitor cells in response to lipid availability: when lipids levels are low, translocates to the nucleus and promotes expression of SOX9, which induces chondrogenic commitment and suppresses fatty acid oxidation. Acts synergistically with ATF4 to suppress osteocalcin/BGLAP activity, increasing glucose levels and triggering glucose intolerance and insulin insensitivity. Also suppresses the transcriptional activity of RUNX2, an upstream activator of osteocalcin/BGLAP. Acts as an inhibitor of glucose sensing in pancreatic beta cells by acting as a transcription repressor and suppressing expression of PDX1. In hepatocytes, promotes gluconeogenesis by acting together with PPARGC1A and CEBPA to activate the expression of genes such as IGFBP1, G6PC1 and PCK1. Also promotes gluconeogenesis by directly promoting expression of PPARGC1A and G6PC1. Important regulator of cell death acting downstream of CDK1, PKB/AKT1 and STK4/MST1. Promotes neural cell death. Mediates insulin action on adipose tissue. Regulates the expression of adipogenic genes such as PPARG during preadipocyte differentiation and, adipocyte size and adipose tissue-specific gene expression in response to excessive calorie intake. Regulates the transcriptional activity of GADD45A and repair of nitric oxide-damaged DNA in beta-cells. Required for the autophagic cell death induction in response to starvation or oxidative stress in a transcription-independent manner. Mediates the function of MLIP in cardiomyocytes hypertrophy and cardiac remodeling. Positive regulator of apoptosis in cardiac smooth muscle cells as a result of its transcriptional activation of pro-apoptotic genes. Regulates endothelial cell (EC) viability and apoptosis in a PPIA/CYPA-dependent manner via transcription of CCL2 and BCL2L11 which are involved in EC chemotaxis and apoptosis. This chain is Forkhead box protein O1, found in Homo sapiens (Human).